A 355-amino-acid chain; its full sequence is 3-dehydroquinate synthase (355 aa).

NAD(+) contacts are provided by residues 71 to 76 (EGEERK), 105 to 109 (GVVGD), 129 to 130 (TS), Lys142, and Lys151. Positions 184, 246, and 263 each coordinate Zn(2+).

The protein belongs to the sugar phosphate cyclases superfamily. Dehydroquinate synthase family. The cofactor is Co(2+). Zn(2+) is required as a cofactor. Requires NAD(+) as cofactor.

It is found in the cytoplasm. The catalysed reaction is 7-phospho-2-dehydro-3-deoxy-D-arabino-heptonate = 3-dehydroquinate + phosphate. Its pathway is metabolic intermediate biosynthesis; chorismate biosynthesis; chorismate from D-erythrose 4-phosphate and phosphoenolpyruvate: step 2/7. Catalyzes the conversion of 3-deoxy-D-arabino-heptulosonate 7-phosphate (DAHP) to dehydroquinate (DHQ). The sequence is that of 3-dehydroquinate synthase from Streptococcus pneumoniae (strain JJA).